The following is a 188-amino-acid chain: MTNPDNMKPVEATDVESAAEKTSEPTPASGTSTITQRWKREDLIKKASPITRGICLLFSLIAFLIMVSNKHGYGRNFNDYEEYRYVLAISIISTLYTAWQTFAHFSKREIFDRRTSILVDFSGDQIVAYLLISAASSAIPLTNIFREGQDNIFTDSAASAISMAIFAFIALALSALFSGYKLSTHSFI.

A disordered region spans residues 1–34 (MTNPDNMKPVEATDVESAAEKTSEPTPASGTSTI). The Cytoplasmic segment spans residues 1–46 (MTNPDNMKPVEATDVESAAEKTSEPTPASGTSTITQRWKREDLIKK). The span at 24 to 34 (EPTPASGTSTI) shows a compositional bias: polar residues. Residues 47 to 67 (ASPITRGICLLFSLIAFLIMV) form a helical membrane-spanning segment. The Extracellular segment spans residues 68 to 84 (SNKHGYGRNFNDYEEYR). Residues 85–105 (YVLAISIISTLYTAWQTFAHF) form a helical membrane-spanning segment. Over 106–124 (SKREIFDRRTSILVDFSGD) the chain is Cytoplasmic. Residues 125-145 (QIVAYLLISAASSAIPLTNIF) form a helical membrane-spanning segment. At 146–156 (REGQDNIFTDS) the chain is on the extracellular side. A helical membrane pass occupies residues 157–177 (AASAISMAIFAFIALALSALF). Topologically, residues 178-188 (SGYKLSTHSFI) are cytoplasmic.

This sequence belongs to the Casparian strip membrane proteins (CASP) family. In terms of assembly, homodimer and heterodimers.

It is found in the cell membrane. The protein is CASP-like protein 4B1 of Arabidopsis thaliana (Mouse-ear cress).